A 219-amino-acid polypeptide reads, in one-letter code: MOB kinase activator-like 1 (219 aa).

Zn(2+) is bound by residues C79, C84, H161, and H166.

The protein belongs to the MOB1/phocein family. In terms of assembly, interacts with and activates trc and wts. Phosphorylated by wts/mats kinase complex. Activated by phosphorylation by Hippo (Hpo) kinase which increases its affinity and its ability to activate Warts (Wts) kinase. As to expression, ubiquitously expressed at low levels in developing tissues (at protein level).

Its subcellular location is the cytoplasm. The protein localises to the cytoskeleton. It localises to the microtubule organizing center. It is found in the centrosome. The protein resides in the nucleus. Its subcellular location is the cytosol. The protein localises to the cell membrane. Functionally, coactivator of Warts (Wts) kinase in the Hippo/SWH (Sav/Wts/Hpo)signaling pathway, a signaling pathway that plays a pivotal role in organ size control and tumor suppression by restricting proliferation and promoting apoptosis. The core of this pathway is composed of a kinase cascade wherein Hippo (Hpo), in complex with its regulatory protein Salvador (Sav), phosphorylates and activates Warts (Wts) in complex with its regulatory protein Mats, which in turn phosphorylates and inactivates the Yorkie (Yki)oncoprotein. The Hippo/SWH signaling pathway inhibits the activity of the transcriptional complex formed by Scalloped (sd) and Yki and the target genes of this pathway include cyclin-E (cycE), diap1 and bantam. Mats is essential for early development and is required for proper chromosomal segregation in developing embryos. This chain is MOB kinase activator-like 1, found in Drosophila melanogaster (Fruit fly).